The primary structure comprises 1061 residues: MPPPPHQKPENVLKRAHELIGVNQAPAALTLLHEHITSKRSRNVPIASLEPVMVLLVEQAVEQKKGKLAKDALYQYKNIAQNTNVGTIELVLKKFIELAAEKVTAAQQKADEVQSSIEATTGSSSVEDLEASETPESILLATVSGEQSKDRTDRAIVTPWLKFLWEAYRTVLDILRNNARLELLYQSTAMQAFDFCLKYARKTEFRRLCELLRNHVQTAAKYSAQMHAINLNDPDTLQRHLETRFQQLNVAVELELWQEAFRSVEDIHTLLSLSKRPAKNIMMANYYEKLTRIFLVGENYLFHAAAWSRYYNLLRQSAAMLATGQSKKSDSPPVSEADLQKAATFVVLSALSIPVISTSRSRGAMVDFDEARKNKNSRLTHLLGLSQAPTRSSLFRDVLSKALLRRASPQIRDLYNILEVDFHPLSICQKISPILAQVGADEEMQKYILPLQQVILTRLFQQLSQVYETVDLEFVQSLAQFPEPFQVTRGTIEKFIMNGNKKGDLAIRMDHATGVLSFDVDVFSSAKAVHAGSAAGSAENESGSVQRLQSTPSQIVRSQLTRLAEVLYTTCRYIDPSFNEARINARDAVLARAKAGAEKEHLEILSRKEVIQKRKDKASEIQAQKEKELARKKMLQEQALQQAEAQRLAEEQKIREQKRMAAEREEIKKKEVEGMLKDMKLDDVELEDLDNLDSNKIRMIKLQQLEREKNTIAEKLRVTGKRLDHLERAFRKEEAKKLPEDYAKQRERDIAAYELIKAQTLKEAELKHKEDVELKHRLTRLMPFYESFRADLHERRRDMFEKRRRDAERELEKQVTLRRKEYRERKLREKREREEKERALREAEERAEREKEEEKQRQEARKEELARLREEREKERERAKEAQARQQQREEEAMARRRAEKAAAAAVPIREREPFAATGSGPRLPLAGTKSTWREREAAKAAGGGAPSDSGPPPARAAPPPIERTDSRDRPAAGPPRLALAGNKPSWREREAAKNAAGGAPPPERSGPPPRVASGRGEPMDRAGSGRGGDRDARDNNGPAPEPLKASGGPGKYVPKFRREG.

Positions Gln-114–Val-126 are enriched in polar residues. Residues Gln-114–Glu-133 are disordered. One can recognise a PCI domain in the interval Leu-339 to Phe-523. Coiled coils occupy residues Glu-609–Asp-724 and Arg-789–Ala-906. Residues Arg-828–Lys-901 show a composition bias toward basic and acidic residues. Residues Arg-828 to Gly-1061 form a disordered region. Composition is skewed to pro residues over residues Ser-950 to Ile-962 and Ala-1000 to Arg-1011.

Belongs to the eIF-3 subunit A family. Component of the eukaryotic translation initiation factor 3 (eIF-3) complex.

The protein resides in the cytoplasm. Its function is as follows. RNA-binding component of the eukaryotic translation initiation factor 3 (eIF-3) complex, which is involved in protein synthesis of a specialized repertoire of mRNAs and, together with other initiation factors, stimulates binding of mRNA and methionyl-tRNAi to the 40S ribosome. The eIF-3 complex specifically targets and initiates translation of a subset of mRNAs involved in cell proliferation. The sequence is that of Eukaryotic translation initiation factor 3 subunit A from Chaetomium globosum (strain ATCC 6205 / CBS 148.51 / DSM 1962 / NBRC 6347 / NRRL 1970) (Soil fungus).